We begin with the raw amino-acid sequence, 1102 residues long: Coiled-coil domain-containing protein AGAP005037 (1102 aa).

Residues 1–11 show a composition bias toward basic and acidic residues; that stretch reads MLIRWKSKDKS. Disordered regions lie at residues 1-69 and 295-318; these read MLIR…HTLG and HKSK…RGMY. The span at 12 to 21 shows a compositional bias: low complexity; the sequence is SSSTSSSSST. The span at 50–65 shows a compositional bias: basic and acidic residues; sequence IDDRRRSARSREDPRR. The stretch at 405 to 430 forms a coiled coil; it reads HRIRVEHMERQLANLTGLVQKALTQN. 2 disordered regions span residues 450–475 and 489–539; these read RNAE…STCH and DIQG…PLVM. Coiled-coil stretches lie at residues 554–579 and 614–654; these read EVYN…LRRL and DKER…EVIN. 3 disordered regions span residues 745–774, 832–958, and 1031–1087; these read LPIP…PSPR, TKIS…CSDN, and LCGG…TLPP. The segment covering 832-849 has biased composition (polar residues); it reads TKISQSQLYPSEPVSSNV. Residues 867-881 are compositionally biased toward pro residues; sequence PPQPTRPTTGKPPVP. Residues 904–918 show a composition bias toward low complexity; the sequence is TSSRSPLASPTSPHV. Over residues 936–958 the composition is skewed to polar residues; it reads DCEQQQRTSEGTDSGSESVCSDN.

This is Coiled-coil domain-containing protein AGAP005037 from Anopheles gambiae (African malaria mosquito).